The following is an 890-amino-acid chain: ATP-dependent DNA helicase DDX11 (890 aa).

Residues 4–424 (KSGRFPFPFQ…KNLMYIKQIL (421 aa)) enclose the Helicase ATP-binding domain. ATP is bound at residue 39-46 (SPTGTGKS). The span at 71 to 85 (LLEGQKDSDVVKEKN) shows a compositional bias: basic and acidic residues. 2 disordered regions span residues 71–95 (LLEG…EPDW) and 176–199 (EYES…DDDD). [4Fe-4S] cluster is bound by residues C246, C264, C294, and C329. The DEAH box signature appears at 372–375 (DEAH).

Belongs to the DEAD box helicase family. DEAH subfamily. DDX11/CHL1 sub-subfamily. The cofactor is [4Fe-4S] cluster.

Its subcellular location is the nucleus. It is found in the nucleolus. The protein localises to the cytoplasm. The protein resides in the cytoskeleton. It localises to the spindle pole. Its subcellular location is the midbody. It is found in the microtubule organizing center. The protein localises to the centrosome. The enzyme catalyses Couples ATP hydrolysis with the unwinding of duplex DNA at the replication fork by translocating in the 5'-3' direction. This creates two antiparallel DNA single strands (ssDNA). The leading ssDNA polymer is the template for DNA polymerase III holoenzyme which synthesizes a continuous strand.. The catalysed reaction is ATP + H2O = ADP + phosphate + H(+). Functionally, DNA-dependent ATPase and ATP-dependent DNA helicase that participates in various functions in genomic stability, including DNA replication, DNA repair and heterochromatin organization as well as in ribosomal RNA synthesis. Plays a role in DNA double-strand break (DSB) repair at the DNA replication fork during DNA replication recovery from DNA damage. Plays a role in the regulation of sister chromatid cohesion and mitotic chromosome segregation. Stimulates 5'-single-stranded DNA flap endonuclease activity of FEN1 in an ATP- and helicase-independent manner. Also plays a role in heterochromatin organization. Involved in rRNA transcription activation through binding to active hypomethylated rDNA gene loci by recruiting UBTF and the RNA polymerase Pol I transcriptional machinery. Plays a role in embryonic development. Associates with chromatin at DNA replication fork regions. Binds to single- and double-stranded DNAs. This chain is ATP-dependent DNA helicase DDX11, found in Danio rerio (Zebrafish).